The following is a 1158-amino-acid chain: Rho1 guanine nucleotide exchange factor 2 (1158 aa).

The disordered stretch occupies residues 42 to 141 (RSSGSITHSP…SFSVSDVSNG (100 aa)). Polar residues predominate over residues 45-63 (GSITHSPTALSSTTSLNEN). Over residues 68–81 (FRPASSLSFSPSSL) the composition is skewed to low complexity. The segment covering 97 to 108 (KNNFYRRSSSTD) has biased composition (polar residues). A compositionally biased stretch (low complexity) spans 132–141 (SFSVSDVSNG). In terms of domain architecture, DH spans 447–634 (KRQEIIFEVI…REFLTKLNYE (188 aa)). In terms of domain architecture, PH spans 670-805 (LIFKGVVKLK…QHIEKQQDII (136 aa)). Phosphoserine is present on residues Ser-746 and Ser-747. A CNH domain is found at 825–1120 (GNKLLCAVAY…KLLTDGRGLI (296 aa)).

The protein localises to the cytoplasm. In terms of biological role, stimulates the exchange of Rho1 and Rho5 GDP-bound form into GTP-bound form. Controls septum formation, cell wall synthesis and localization of F-actin patches. This is Rho1 guanine nucleotide exchange factor 2 (rgf2) from Schizosaccharomyces pombe (strain 972 / ATCC 24843) (Fission yeast).